We begin with the raw amino-acid sequence, 334 residues long: Ornithine carbamoyltransferase, catabolic (334 aa).

Carbamoyl phosphate contacts are provided by residues 57–60 (STRT), glutamine 84, arginine 108, and 135–138 (HPTQ). Residues asparagine 168, aspartate 232, and 236–237 (SM) each bind L-ornithine. Residues 274–275 (CL) and arginine 321 each bind carbamoyl phosphate.

The protein belongs to the aspartate/ornithine carbamoyltransferase superfamily. OTCase family.

The protein localises to the cytoplasm. The catalysed reaction is carbamoyl phosphate + L-ornithine = L-citrulline + phosphate + H(+). It functions in the pathway amino-acid degradation; L-arginine degradation via ADI pathway; carbamoyl phosphate from L-arginine: step 2/2. In terms of biological role, reversibly catalyzes the transfer of the carbamoyl group from carbamoyl phosphate (CP) to the N(epsilon) atom of ornithine (ORN) to produce L-citrulline. This chain is Ornithine carbamoyltransferase, catabolic (arcB), found in Haemophilus influenzae (strain ATCC 51907 / DSM 11121 / KW20 / Rd).